The sequence spans 304 residues: Large ribosomal subunit protein uL18 (304 aa).

The protein belongs to the universal ribosomal protein uL18 family. As to quaternary structure, component of a hexameric 5S RNP precursor complex, composed of 5S RNA, RRS1, RPF2, RPL5, RPL11 and SYO1; this complex acts as a precursor for ribosome assembly.

Its subcellular location is the cytoplasm. Functionally, component of the ribosome, a large ribonucleoprotein complex responsible for the synthesis of proteins in the cell. The small ribosomal subunit (SSU) binds messenger RNAs (mRNAs) and translates the encoded message by selecting cognate aminoacyl-transfer RNA (tRNA) molecules. The large subunit (LSU) contains the ribosomal catalytic site termed the peptidyl transferase center (PTC), which catalyzes the formation of peptide bonds, thereby polymerizing the amino acids delivered by tRNAs into a polypeptide chain. The nascent polypeptides leave the ribosome through a tunnel in the LSU and interact with protein factors that function in enzymatic processing, targeting, and the membrane insertion of nascent chains at the exit of the ribosomal tunnel. This Chaetomium thermophilum (strain DSM 1495 / CBS 144.50 / IMI 039719) (Thermochaetoides thermophila) protein is Large ribosomal subunit protein uL18.